Here is a 99-residue protein sequence, read N- to C-terminus: RNA-binding protein Hfq (99 aa).

A Sm domain is found at 9-68 (DPFLNALRRERVPVSIYLVNGIKLQGQIESFDQFVILLKNTVSQMVYKHAISTVVPSRPV). The disordered stretch occupies residues 64–99 (PSRPVSHHSNNPGGSNNYHGSNTTAQQQSQDADDAE). The span at 70–93 (HHSNNPGGSNNYHGSNTTAQQQSQ) shows a compositional bias: low complexity.

This sequence belongs to the Hfq family. Homohexamer.

Its function is as follows. RNA chaperone that binds small regulatory RNA (sRNAs) and mRNAs to facilitate mRNA translational regulation in response to envelope stress, environmental stress and changes in metabolite concentrations. Also binds with high specificity to tRNAs. This chain is RNA-binding protein Hfq, found in Pectobacterium atrosepticum (strain SCRI 1043 / ATCC BAA-672) (Erwinia carotovora subsp. atroseptica).